Reading from the N-terminus, the 167-residue chain is uncharacterized protein (167 aa).

Residues I4–D24 traverse the membrane as a helical segment.

The protein resides in the membrane. This is an uncharacterized protein from Rickettsia prowazekii (strain Madrid E).